The sequence spans 308 residues: Phenylcoumaran benzylic ether reductase Pyrc5 (308 aa).

Residues 11–17 (GGTGYIG), Arg36, and Lys45 each bind NADP(+). The active-site Proton acceptor is the Lys133. Arg137 contacts NADP(+).

The protein belongs to the NmrA-type oxidoreductase family. Isoflavone reductase subfamily.

It catalyses the reaction (-)-dehydrodiconiferyl alcohol + NADPH + H(+) = (S)-isodihydrodehydrodiconiferyl alcohol + NADP(+). The enzyme catalyses (+)-dehydrodiconiferyl alcohol + NADPH + H(+) = (R)-isodihydrodehydrodiconiferyl alcohol + NADP(+). Functionally, oxidoreductase involved in lignan biosynthesis. Catalyzes the NADPH-dependent reduction of phenylcoumaran benzylic ethers. Converts dehydrodiconiferyl alcohol (DDC) to isodihydrodehydrodiconiferyl alcohol (IDDDC). This chain is Phenylcoumaran benzylic ether reductase Pyrc5, found in Pyrus communis (Pear).